The sequence spans 287 residues: Inactive phospholipid phosphatase 7 (287 aa).

Residues 1-75 are disordered; sequence MPANQTRSRA…NNKDKKELPE (75 aa). Over 1–120 the chain is Cytoplasmic; the sequence is MPANQTRSRA…SSSWGSVRSM (120 aa). Residues 31 to 40 are compositionally biased toward gly residues; the sequence is SGGGGGGGES. Residues 49–65 are compositionally biased toward low complexity; it reads QRQQQNQQQQGDNPQPE. The chain crosses the membrane as a helical span at residues 121–141; it reads VKLLALTGHGIPWVFGTIVCL. Residues 142-146 are Extracellular-facing; the sequence is MRSNT. The helical transmembrane segment at 147 to 167 threads the bilayer; it reads LAGQEVLVNLLLALLLDVMTV. Residues 168–215 are Cytoplasmic-facing; sequence SGMQKLVKRKGPWEMPPGFFDYLAMDIYSFPAAHASRAVMVSKFLLAH. Residues 216-236 traverse the membrane as a helical segment; the sequence is LVLAVPLRILLVLWAILVGIS. The Extracellular portion of the chain corresponds to 237–247; it reads RVLLGRHHLTD. The chain crosses the membrane as a helical span at residues 248 to 268; that stretch reads VGCGFALGFLHYSLVEMVWLS. The Cytoplasmic portion of the chain corresponds to 269 to 287; that stretch reads SNTCQTLISIGTFNWSPLY.

It belongs to the PA-phosphatase related phosphoesterase family.

It localises to the nucleus envelope. The protein localises to the endoplasmic reticulum membrane. The protein resides in the membrane. Plays a role as negative regulator of myoblast differentiation, in part through effects on MTOR signaling. Has no detectable enzymatic activity. This chain is Inactive phospholipid phosphatase 7, found in Danio rerio (Zebrafish).